The following is an 80-amino-acid chain: MKPWILLLLAGLLILSTQLTTAKTTKQLRLPKVKPGECPKVKIPPDYPCNQYCVWDFDCEGNKKCCPVGCAKECFPPGPL.

The N-terminal stretch at 1 to 22 is a signal peptide; sequence MKPWILLLLAGLLILSTQLTTA. Positions 31-78 constitute a WAP domain; that stretch reads PKVKPGECPKVKIPPDYPCNQYCVWDFDCEGNKKCCPVGCAKECFPPG. 4 disulfides stabilise this stretch: Cys38-Cys66, Cys49-Cys70, Cys53-Cys65, and Cys59-Cys74.

It belongs to the venom waprin family. In terms of tissue distribution, expressed by the venom gland.

It is found in the secreted. Its function is as follows. Damages membranes of susceptible bacteria. Has no hemolytic activity. Not toxic to mice. Does not inhibit the proteinases elastase and cathepsin G. The sequence is that of Waprin-Phi3 from Philodryas olfersii (Green snake).